A 1775-amino-acid chain; its full sequence is Atrochrysone carboxylic acid synthase (1775 aa).

The region spanning 35-262 (LRRLQALSKD…YAKWASLPIF (228 aa)) is the Starter acyltransferase (SAT) domain. A Ketosynthase family 3 (KS3) domain is found at 400–833 (DSKIAIVGMS…GGNTTMLLEE (434 aa)). Active-site for beta-ketoacyl synthase activity residues include Cys573, His708, and His750. The Malonyl-CoA:ACP transacylase (MAT) domain occupies 934–1244 (FAFTGQGAFY…ENNWNTLADS (311 aa)). The tract at residues 1313 to 1631 (TSSIHQVLQE…RSLLPTFFSP (319 aa)) is product template (PT) domain. The N-terminal hotdog fold stretch occupies residues 1317–1451 (HQVLQEDVTG…SAVVEYGDAN (135 aa)). Residues 1317 to 1626 (HQVLQEDVTG…FRRFPRSLLP (310 aa)) form the PKS/mFAS DH domain. His1349 acts as the Proton acceptor; for dehydratase activity in catalysis. Residues 1480–1626 (AAVLPRNMAY…FRRFPRSLLP (147 aa)) form a C-terminal hotdog fold region. Asp1537 acts as the Proton donor; for dehydratase activity in catalysis. Residues 1671–1697 (TAAPVPAPAPVPAKRAEPAPAAAQAAA) are disordered. The span at 1688–1697 (PAPAAAQAAA) shows a compositional bias: low complexity. The Carrier domain occupies 1697 to 1774 (ATQNPTITGA…ELKTYIEETF (78 aa)). Ser1734 carries the post-translational modification O-(pantetheine 4'-phosphoryl)serine.

It carries out the reaction holo-[ACP] + 8 malonyl-CoA + 8 H(+) = atrochrysone carboxyl-[ACP] + 8 CO2 + 8 CoA + 2 H2O. The protein operates within secondary metabolite biosynthesis. Its function is as follows. Non-reducing polyketide synthase; part of the gene cluster that mediates the biosynthesis of physcion, a natural anthraquinone fungicide that can prevent plant fungal infections. The pathway begins with the polyketide synthase AcPKS that condenses 8 malonyl-CoA units to synthesize atrochrysone thioester which is released from the synthase by the atrochrysone carboxyl ACP thioesterase AcTE that breaks the thioester bond and leads to free atrochrysone carboxylic acid. Spontaneous decarboxylation of atrochrysone carboxylic acid leads to the formation of atrochrysone. Then, atrochrysone undergoes spontaneous dehydration and oxidation, giving the products emodin anthrone and emodin. The O-methyltransferase AcOMT then methylates the C-6 hydroxyl of emodin to form physcion. In Aspergillus chevalieri (Eurotium chevalieri), this protein is Atrochrysone carboxylic acid synthase.